The chain runs to 165 residues: Disulfide bond formation protein B (165 aa).

Residues 1 to 11 (MICSKVPVRAW) are Cytoplasmic-facing. The chain crosses the membrane as a helical span at residues 12–28 (FATLGLGCLGLVAVGMA). The Periplasmic portion of the chain corresponds to 29 to 46 (LQTLLHLAPCPLCIFQRL). A disulfide bridge links cysteine 38 with cysteine 41. Residues 47–61 (LYIMIGFVGLLGFVL) form a helical membrane-spanning segment. Residues 62–66 (PAGRL) are Cytoplasmic-facing. Residues 67-84 (LWSTLAAGLGVLGFGVAA) form a helical membrane-spanning segment. At 85-142 (YQTWMQAFPDLAPECGFTDPNAIERLVDWLGMEWPSMFLATGFCTSRDWELLGLSMAN) the chain is on the periplasmic side. A disulfide bond links cysteine 99 and cysteine 128. Residues 143 to 161 (WSVLIFAGIVAYAVLLFVR) traverse the membrane as a helical segment. The Cytoplasmic segment spans residues 162–165 (KDRA).

The protein belongs to the DsbB family.

The protein localises to the cell inner membrane. Its function is as follows. Required for disulfide bond formation in some periplasmic proteins. Acts by oxidizing the DsbA protein. This Dechloromonas aromatica (strain RCB) protein is Disulfide bond formation protein B.